A 64-amino-acid chain; its full sequence is Alpha-conotoxin Lt14.1 (64 aa).

The signal sequence occupies residues 1–20 (MKLSVMFIVFLMLTMPMTCA). The propeptide occupies 21–50 (GISRSATNGGEADVRAHDKAANLMALLQER). 2 disulfide bridges follow: cysteine 52/cysteine 60 and cysteine 56/cysteine 63. Position 63 is a cysteine amide (cysteine 63).

Belongs to the conotoxin L superfamily. Post-translationally, may contain a 4-hydroxyproline. In terms of tissue distribution, expressed by the venom duct.

It localises to the secreted. In terms of biological role, alpha-conotoxins act on postsynaptic membranes, they bind to the nicotinic acetylcholine receptors (nAChR) and thus inhibit them. This synthetic peptide displays analgesic activity in a hot plate assay. Analgesia is also observed against second phase pain in formalin-induced inflammatory pain model, and in a rat model of mechanically-induced pain. Effects downstream of nAChR are inhibition of calcium influx, inhibition of ERK1/2 phosphorylation and inhibition of c-fos/NOS expression. Genes associated with drug dependence are not up-regulated by this toxin. Treatment with this toxin reversed morphine withdrawal symptoms in mice. This is Alpha-conotoxin Lt14.1 from Conus litteratus (Lettered cone).